The primary structure comprises 116 residues: Large ribosomal subunit protein bL19 (116 aa).

Belongs to the bacterial ribosomal protein bL19 family.

Functionally, this protein is located at the 30S-50S ribosomal subunit interface and may play a role in the structure and function of the aminoacyl-tRNA binding site. The protein is Large ribosomal subunit protein bL19 of Lactobacillus gasseri (strain ATCC 33323 / DSM 20243 / BCRC 14619 / CIP 102991 / JCM 1131 / KCTC 3163 / NCIMB 11718 / NCTC 13722 / AM63).